We begin with the raw amino-acid sequence, 193 residues long: DNA damage-inducible transcript 4-like protein (193 aa).

Belongs to the DDIT4 family. In terms of tissue distribution, expressed in heart, skeletal muscle and testis.

It is found in the cytoplasm. Functionally, inhibits cell growth by regulating the TOR signaling pathway upstream of the TSC1-TSC2 complex and downstream of AKT1. This Rattus norvegicus (Rat) protein is DNA damage-inducible transcript 4-like protein (Ddit4l).